The primary structure comprises 399 residues: Nicotinate phosphoribosyltransferase (399 aa).

Phosphohistidine; by autocatalysis is present on His217.

The protein belongs to the NAPRTase family. Transiently phosphorylated on a His residue during the reaction cycle. Phosphorylation strongly increases the affinity for substrates and increases the rate of nicotinate D-ribonucleotide production. Dephosphorylation regenerates the low-affinity form of the enzyme, leading to product release.

It catalyses the reaction nicotinate + 5-phospho-alpha-D-ribose 1-diphosphate + ATP + H2O = nicotinate beta-D-ribonucleotide + ADP + phosphate + diphosphate. It participates in cofactor biosynthesis; NAD(+) biosynthesis; nicotinate D-ribonucleotide from nicotinate: step 1/1. Functionally, catalyzes the synthesis of beta-nicotinate D-ribonucleotide from nicotinate and 5-phospho-D-ribose 1-phosphate at the expense of ATP. The chain is Nicotinate phosphoribosyltransferase from Burkholderia ambifaria (strain MC40-6).